The primary structure comprises 96 residues: Muconolactone Delta-isomerase (96 aa).

This sequence belongs to the muconolactone Delta-isomerase family. Homodecamer.

The catalysed reaction is (S)-muconolactone = (4,5-dihydro-5-oxofuran-2-yl)-acetate. The protein operates within aromatic compound metabolism; beta-ketoadipate pathway; 5-oxo-4,5-dihydro-2-furylacetate from catechol: step 3/3. The chain is Muconolactone Delta-isomerase (catC) from Pseudomonas aeruginosa (strain ATCC 15692 / DSM 22644 / CIP 104116 / JCM 14847 / LMG 12228 / 1C / PRS 101 / PAO1).